Reading from the N-terminus, the 481-residue chain is Aromatic amino acid aminotransferase C1773.13 (481 aa).

It belongs to the class-I pyridoxal-phosphate-dependent aminotransferase family. It depends on pyridoxal 5'-phosphate as a cofactor.

It localises to the cytoplasm. It catalyses the reaction an aromatic L-alpha-amino acid + 2-oxoglutarate = an aromatic oxo-acid + L-glutamate. In terms of biological role, has aromatic amino acid transaminase activity. The polypeptide is Aromatic amino acid aminotransferase C1773.13 (Schizosaccharomyces pombe (strain 972 / ATCC 24843) (Fission yeast)).